Reading from the N-terminus, the 306-residue chain is Curved DNA-binding protein (306 aa).

The region spanning Asp-5–Trp-69 is the J domain.

The protein localises to the cytoplasm. Its subcellular location is the nucleoid. DNA-binding protein that preferentially recognizes a curved DNA sequence. It is probably a functional analog of DnaJ; displays overlapping activities with DnaJ, but functions under different conditions, probably acting as a molecular chaperone in an adaptive response to environmental stresses other than heat shock. Lacks autonomous chaperone activity; binds native substrates and targets them for recognition by DnaK. Its activity is inhibited by the binding of CbpM. The sequence is that of Curved DNA-binding protein from Salmonella arizonae (strain ATCC BAA-731 / CDC346-86 / RSK2980).